Consider the following 65-residue polypeptide: MPKIKTRRSAAKRFSQTGSGKFKRRRQNLRHILTKKAASRKMRLGQSTTVDKANEKAVRRMLPNG.

Composition is skewed to basic residues over residues 1-11 (MPKIKTRRSAA) and 21-43 (KFKR…RKMR). The tract at residues 1 to 65 (MPKIKTRRSA…KAVRRMLPNG (65 aa)) is disordered.

The protein belongs to the bacterial ribosomal protein bL35 family.

The protein is Large ribosomal subunit protein bL35 of Desulfovibrio desulfuricans (strain ATCC 27774 / DSM 6949 / MB).